Here is a 486-residue protein sequence, read N- to C-terminus: Galactose-1-phosphate uridylyltransferase (486 aa).

The protein belongs to the galactose-1-phosphate uridylyltransferase type 2 family.

The protein localises to the cytoplasm. The enzyme catalyses alpha-D-galactose 1-phosphate + UDP-alpha-D-glucose = alpha-D-glucose 1-phosphate + UDP-alpha-D-galactose. The protein operates within carbohydrate metabolism; galactose metabolism. This is Galactose-1-phosphate uridylyltransferase from Lacticaseibacillus paracasei (strain ATCC 334 / BCRC 17002 / CCUG 31169 / CIP 107868 / KCTC 3260 / NRRL B-441) (Lactobacillus paracasei).